A 469-amino-acid chain; its full sequence is RuvB-like helicase 2 (469 aa).

74–81 (GPPSTGKT) contributes to the ATP binding site.

The protein belongs to the RuvB family. May form heterododecamers with RVB1. Component of the SWR1 chromatin remodeling complex, the INO80 chromatin remodeling complex, and of the R2TP complex.

The protein resides in the nucleus. The enzyme catalyses ATP + H2O = ADP + phosphate + H(+). Functionally, DNA helicase which participates in several chromatin remodeling complexes, including the SWR1 and the INO80 complexes. The SWR1 complex mediates the ATP-dependent exchange of histone H2A for the H2A variant HZT1 leading to transcriptional regulation of selected genes by chromatin remodeling. The INO80 complex remodels chromatin by shifting nucleosomes and is involved in DNA repair. Also involved in pre-rRNA processing. The polypeptide is RuvB-like helicase 2 (RVB2) (Eremothecium gossypii (strain ATCC 10895 / CBS 109.51 / FGSC 9923 / NRRL Y-1056) (Yeast)).